A 192-amino-acid polypeptide reads, in one-letter code: Putative manganese efflux pump MntP (192 aa).

A run of 6 helical transmembrane segments spans residues 3 to 23 (FSAILLLALGLAMDATAVAAA), 36 to 56 (VLLVAGFFGGAQALMPVIGWL), 65 to 85 (VQAWDHWIAFVLLAFIGGKML), 112 to 132 (FVLAIATSIDALAVGITLPML), 136 to 156 (FAISVVTIGVVTALLSAAGLF), and 171 to 191 (LAGGVVLIGLGFKILLEHLVL).

The protein belongs to the MntP (TC 9.B.29) family.

The protein localises to the cell inner membrane. Probably functions as a manganese efflux pump. The sequence is that of Putative manganese efflux pump MntP from Sorangium cellulosum (strain So ce56) (Polyangium cellulosum (strain So ce56)).